We begin with the raw amino-acid sequence, 449 residues long: VIRF-1 (449 aa).

Positions 1–60 (MDPGQRPNPFGAPGAIPKKPCLSQGSPGTSGSGAPCDEPSRSESPGEGPSGTGGSAAAGD) are disordered. The IRF tryptophan pentad repeat DNA-binding region spans 89–195 (KASIKDWIVC…HHFLVFRVRK (107 aa)). 2 positions are modified to N6-propionyllysine; by host: K406 and K442.

It belongs to the IRF family. As to quaternary structure, forms homodimers. Interacts with host IRF3, IRF7, and CREBBP. Interacts with host SYNCRIP. Interacts with host USP7. Interacts (via C-terminus) with host HERC5. Interacts with host GABARAPL1. Interacts with host SIRT6. In terms of processing, ISGylated. Propionylated in lysine residues Lys-406 and Lys-442, which is required for effective inhibition of IFN-beta production and antiviral signaling.

The protein resides in the host cytoplasm. Its function is as follows. Plays a role in the inhibition of host innate response by repressing the expression of interferon-inducible genes and blocking host IRF1- and IRF3-mediated transcription. Blocks the interaction between host IRF3 and CREBBP. Regulates the host cellular metabolism by increasing glucose uptake, ATP production and lactate secretion through down-regulation of heterogeneous nuclear ribonuclear protein Q1/SYNCRIP. Mechanistically, induces ubiquitination and degradation of SYNCRIP through the ubiquitin-proteasome pathway by recruiting KLHL3/CUL3 ubiquitin ligase complex. Disrupts host TP53 signaling pathway during viral infection by interacting with host USP7 and thereby decreasing the availability of USP7 for deubiquitinating and stabilizing TP53. Plays a role in the global inhibition of protein ISGylation by interacting with host HERC5 leading to its inhibition. Promotes its own propionylation by blocking SIRT6 interaction with ubiquitin-specific peptidase 10/USP10 leading to SIRT6 degradation via a ubiquitin-proteasome pathway. In turn, propionylation is required to block IRF3-CBP/p300 recruitment and to repress the STING DNA sensing pathway. Plays a role in the activation of mitophagy during infection via interaction with the host proteins NIX/BNIP3L, TUFM and GABARAPL1 thereby inhibiting antiviral responses and contributing to productive replication. The sequence is that of VIRF-1 (vIRF-1) from Homo sapiens (Human).